A 295-amino-acid polypeptide reads, in one-letter code: sn-glycerol-3-phosphate transport system permease protein UgpA (295 aa).

Residues 1 to 11 (MSSSRPVFRSR) lie on the Cytoplasmic side of the membrane. A helical membrane pass occupies residues 12-32 (WLPYLLVAPQLIITVIFFIWP). Topologically, residues 33 to 80 (AGEALWYSLQSVDPFGFSSQFVGLDNFVTLFHDSYYLDAFWTTIKFST) are periplasmic. Residues 76-284 (IKFSTFVTVS…FLVIVLTVVQ (209 aa)) enclose the ABC transmembrane type-1 domain. Residues 81–101 (FVTVSGLLVSLFFAALVEYIV) traverse the membrane as a helical segment. Over 102-109 (RGSRFYQT) the chain is Cytoplasmic. The helical transmembrane segment at 110 to 130 (LMLLPYAVAPAVAAVLWIFLF) threads the bilayer. The Periplasmic portion of the chain corresponds to 131 to 156 (NPGRGLITHFLAEFGYDWNHAQNSGQ). Residues 157–177 (AMFLVVFASVWKQISYNFLFF) form a helical membrane-spanning segment. At 178-207 (YAALQSIPRSLIEAAAIDGAGPIRRFFKIA) the chain is on the cytoplasmic side. Residues 208-228 (LPLIAPVSFFLLVVNLVYAFF) form a helical membrane-spanning segment. Residues 229–262 (DTFPVIDAATSGGPVQATTTLIYKIYREGFTGLD) are Periplasmic-facing. Residues 263 to 283 (LASSAAQSVVLMFLVIVLTVV) traverse the membrane as a helical segment. Residues 284–295 (QFRYVEGKVRYQ) are Cytoplasmic-facing.

It belongs to the binding-protein-dependent transport system permease family. UgpAE subfamily. In terms of assembly, the complex is composed of two ATP-binding proteins (UgpC), two transmembrane proteins (UgpA and UgpE) and a solute-binding protein (UgpB).

Its subcellular location is the cell inner membrane. In terms of biological role, part of the ABC transporter complex UgpBAEC involved in sn-glycerol-3-phosphate (G3P) import. Probably responsible for the translocation of the substrate across the membrane. This Escherichia coli O6:K15:H31 (strain 536 / UPEC) protein is sn-glycerol-3-phosphate transport system permease protein UgpA (ugpA).